The sequence spans 325 residues: Elongation factor P--(R)-beta-lysine ligase (325 aa).

Position 76–78 (76–78 (SPE)) interacts with substrate. Residues 100–102 (RNE) and Asn109 contribute to the ATP site. Residue Tyr118 participates in substrate binding. 244-245 (EL) is an ATP binding site. Glu251 is a substrate binding site. Gly300 provides a ligand contact to ATP.

The protein belongs to the class-II aminoacyl-tRNA synthetase family. EpmA subfamily. In terms of assembly, homodimer.

It catalyses the reaction D-beta-lysine + L-lysyl-[protein] + ATP = N(6)-((3R)-3,6-diaminohexanoyl)-L-lysyl-[protein] + AMP + diphosphate + H(+). In terms of biological role, with EpmB is involved in the beta-lysylation step of the post-translational modification of translation elongation factor P (EF-P) on 'Lys-34'. Catalyzes the ATP-dependent activation of (R)-beta-lysine produced by EpmB, forming a lysyl-adenylate, from which the beta-lysyl moiety is then transferred to the epsilon-amino group of EF-P 'Lys-34'. This is Elongation factor P--(R)-beta-lysine ligase from Escherichia fergusonii (strain ATCC 35469 / DSM 13698 / CCUG 18766 / IAM 14443 / JCM 21226 / LMG 7866 / NBRC 102419 / NCTC 12128 / CDC 0568-73).